The following is a 432-amino-acid chain: Putative D-alanyl-D-alanine carboxypeptidase (432 aa).

The chain crosses the membrane as a helical; Signal-anchor span at residues 7–25 (ATVLLTFSLSAFAVEYPVL).

Belongs to the peptidase S12 family. YfeW subfamily.

The protein localises to the cell inner membrane. The catalysed reaction is Preferential cleavage: (Ac)2-L-Lys-D-Ala-|-D-Ala. Also transpeptidation of peptidyl-alanyl moieties that are N-acyl substituents of D-alanine.. This Salmonella enteritidis PT4 (strain P125109) protein is Putative D-alanyl-D-alanine carboxypeptidase.